The chain runs to 182 residues: MISSTMAEKVVDPYAEALIALGSGQGLLDTFAADMRFIAEVLRATPELGQFLANPVIKAEAKKNLLQQVFADQIHPLLLNALKLLTDRRRIMFLGTVCRRFLDLQRKLQNIVLAEVTTAIPLTEAQQQSIRERVMDFTQASGVELQATQDPELLGGVVIKIGSQVIDLSLRGQLRRLALQLA.

This sequence belongs to the ATPase delta chain family. In terms of assembly, F-type ATPases have 2 components, F(1) - the catalytic core - and F(0) - the membrane proton channel. F(1) has five subunits: alpha(3), beta(3), gamma(1), delta(1), epsilon(1). CF(0) has four main subunits: a(1), b(1), b'(1) and c(10-14). The alpha and beta chains form an alternating ring which encloses part of the gamma chain. F(1) is attached to F(0) by a central stalk formed by the gamma and epsilon chains, while a peripheral stalk is formed by the delta, b and b' chains.

Its subcellular location is the cellular thylakoid membrane. Functionally, f(1)F(0) ATP synthase produces ATP from ADP in the presence of a proton or sodium gradient. F-type ATPases consist of two structural domains, F(1) containing the extramembraneous catalytic core and F(0) containing the membrane proton channel, linked together by a central stalk and a peripheral stalk. During catalysis, ATP synthesis in the catalytic domain of F(1) is coupled via a rotary mechanism of the central stalk subunits to proton translocation. In terms of biological role, this protein is part of the stalk that links CF(0) to CF(1). It either transmits conformational changes from CF(0) to CF(1) or is implicated in proton conduction. The polypeptide is ATP synthase subunit delta (Synechococcus sp. (strain JA-2-3B'a(2-13)) (Cyanobacteria bacterium Yellowstone B-Prime)).